Consider the following 197-residue polypeptide: Imidazoleglycerol-phosphate dehydratase (197 aa).

Belongs to the imidazoleglycerol-phosphate dehydratase family.

It localises to the cytoplasm. It carries out the reaction D-erythro-1-(imidazol-4-yl)glycerol 3-phosphate = 3-(imidazol-4-yl)-2-oxopropyl phosphate + H2O. It functions in the pathway amino-acid biosynthesis; L-histidine biosynthesis; L-histidine from 5-phospho-alpha-D-ribose 1-diphosphate: step 6/9. The chain is Imidazoleglycerol-phosphate dehydratase from Pseudomonas putida (strain ATCC 700007 / DSM 6899 / JCM 31910 / BCRC 17059 / LMG 24140 / F1).